A 283-amino-acid polypeptide reads, in one-letter code: 2-dehydro-3-deoxyphosphooctonate aldolase (283 aa).

This sequence belongs to the KdsA family.

The protein localises to the cytoplasm. The catalysed reaction is D-arabinose 5-phosphate + phosphoenolpyruvate + H2O = 3-deoxy-alpha-D-manno-2-octulosonate-8-phosphate + phosphate. Its pathway is carbohydrate biosynthesis; 3-deoxy-D-manno-octulosonate biosynthesis; 3-deoxy-D-manno-octulosonate from D-ribulose 5-phosphate: step 2/3. It participates in bacterial outer membrane biogenesis; lipopolysaccharide biosynthesis. This Prochlorococcus marinus (strain MIT 9313) protein is 2-dehydro-3-deoxyphosphooctonate aldolase.